The sequence spans 265 residues: Hydroxyethylthiazole kinase (265 aa).

Methionine 36 serves as a coordination point for substrate. Positions 112 and 160 each coordinate ATP. Substrate is bound at residue glycine 187.

Belongs to the Thz kinase family. Mg(2+) is required as a cofactor.

The catalysed reaction is 5-(2-hydroxyethyl)-4-methylthiazole + ATP = 4-methyl-5-(2-phosphooxyethyl)-thiazole + ADP + H(+). The protein operates within cofactor biosynthesis; thiamine diphosphate biosynthesis; 4-methyl-5-(2-phosphoethyl)-thiazole from 5-(2-hydroxyethyl)-4-methylthiazole: step 1/1. Its function is as follows. Catalyzes the phosphorylation of the hydroxyl group of 4-methyl-5-beta-hydroxyethylthiazole (THZ). The chain is Hydroxyethylthiazole kinase from Clostridium perfringens (strain 13 / Type A).